The primary structure comprises 199 residues: 3-isopropylmalate dehydratase small subunit (199 aa).

Belongs to the LeuD family. LeuD type 1 subfamily. As to quaternary structure, heterodimer of LeuC and LeuD.

It carries out the reaction (2R,3S)-3-isopropylmalate = (2S)-2-isopropylmalate. The protein operates within amino-acid biosynthesis; L-leucine biosynthesis; L-leucine from 3-methyl-2-oxobutanoate: step 2/4. In terms of biological role, catalyzes the isomerization between 2-isopropylmalate and 3-isopropylmalate, via the formation of 2-isopropylmaleate. This Aeromonas hydrophila subsp. hydrophila (strain ATCC 7966 / DSM 30187 / BCRC 13018 / CCUG 14551 / JCM 1027 / KCTC 2358 / NCIMB 9240 / NCTC 8049) protein is 3-isopropylmalate dehydratase small subunit.